The primary structure comprises 483 residues: Isocitrate dehydrogenase [NADP] (483 aa).

Position 74 (threonine 74) interacts with NADP(+). 5 residues coordinate D-threo-isocitrate: serine 83, asparagine 85, arginine 89, arginine 99, and arginine 121. Aspartate 232 serves as a coordination point for Mg(2+). NADP(+) contacts are provided by residues 264–270 (HGSAPDI) and asparagine 277.

It belongs to the isocitrate and isopropylmalate dehydrogenases family. In terms of assembly, homodimer. Mg(2+) is required as a cofactor. Requires Mn(2+) as cofactor.

The catalysed reaction is D-threo-isocitrate + NADP(+) = 2-oxoglutarate + CO2 + NADPH. Functionally, catalyzes the oxidative decarboxylation of isocitrate to 2-oxoglutarate and carbon dioxide with the concomitant reduction of NADP(+). This chain is Isocitrate dehydrogenase [NADP] (icd), found in Rickettsia bellii (strain RML369-C).